The following is a 463-amino-acid chain: Chaperone SurA (463 aa).

The signal sequence occupies residues 1–25 (MTKPFSVLLASLLVITSTVSPLASA). 2 consecutive PpiC domains span residues 174–276 (GSQY…KLVE) and 289–388 (LTEY…QRVG). 2 disordered regions span residues 329-348 (ATAKESSEDTNSRGQGGDLG) and 434-463 (GDRADADATAAPEPAAAPAAPTPPPAQPTR). Residues 440–452 (DATAAPEPAAAPA) show a composition bias toward low complexity. Residues 453-463 (APTPPPAQPTR) are compositionally biased toward pro residues.

The protein localises to the periplasm. The catalysed reaction is [protein]-peptidylproline (omega=180) = [protein]-peptidylproline (omega=0). In terms of biological role, chaperone involved in the correct folding and assembly of outer membrane proteins. Recognizes specific patterns of aromatic residues and the orientation of their side chains, which are found more frequently in integral outer membrane proteins. May act in both early periplasmic and late outer membrane-associated steps of protein maturation. The chain is Chaperone SurA from Xanthomonas campestris pv. campestris (strain 8004).